We begin with the raw amino-acid sequence, 226 residues long: Enolase-phosphatase E1 (226 aa).

Belongs to the HAD-like hydrolase superfamily. MasA/MtnC family. In terms of assembly, monomer. Mg(2+) serves as cofactor.

The enzyme catalyses 5-methylsulfanyl-2,3-dioxopentyl phosphate + H2O = 1,2-dihydroxy-5-(methylsulfanyl)pent-1-en-3-one + phosphate. Its pathway is amino-acid biosynthesis; L-methionine biosynthesis via salvage pathway; L-methionine from S-methyl-5-thio-alpha-D-ribose 1-phosphate: step 3/6. It functions in the pathway amino-acid biosynthesis; L-methionine biosynthesis via salvage pathway; L-methionine from S-methyl-5-thio-alpha-D-ribose 1-phosphate: step 4/6. In terms of biological role, bifunctional enzyme that catalyzes the enolization of 2,3-diketo-5-methylthiopentyl-1-phosphate (DK-MTP-1-P) into the intermediate 2-hydroxy-3-keto-5-methylthiopentenyl-1-phosphate (HK-MTPenyl-1-P), which is then dephosphorylated to form the acireductone 1,2-dihydroxy-3-keto-5-methylthiopentene (DHK-MTPene). This is Enolase-phosphatase E1 from Shewanella sp. (strain MR-4).